Here is a 489-residue protein sequence, read N- to C-terminus: E3 ubiquitin-protein ligase RGLG1 (489 aa).

Positions 1 to 10 are enriched in basic and acidic residues; the sequence is MGGGNSKEES. Positions 1–125 are disordered; that stretch reads MGGGNSKEES…SQSQVADRKK (125 aa). A lipid anchor (N-myristoyl glycine) is attached at G2. Residues 11 to 23 show a composition bias toward low complexity; that stretch reads SSPSSSSWASHQS. Pro residues predominate over residues 34–57; the sequence is YPPPPTYAPAPSPAPAPAPVPAPS. A compositionally biased stretch (low complexity) spans 58–75; it reads PASSYGPQYSQEGYASQP. Positions 76–88 are enriched in pro residues; the sequence is NNPPPPTYAPAPS. A VWFA domain is found at 156–376; it reads NLIVGIDFTK…KETEFALSAL (221 aa). An RING-type zinc finger spans residues 446–479; the sequence is CPICLSNPKNMAFGCGHQTCCECGPDLKVCPICR.

As to quaternary structure, interacts with the heterodimer UBC35/UEV1B. Interacts with ERF053. Interacts with PP2CA. In terms of processing, N-myristoylated. In terms of tissue distribution, ubiquitously expressed.

It is found in the cell membrane. The protein resides in the nucleus. It carries out the reaction S-ubiquitinyl-[E2 ubiquitin-conjugating enzyme]-L-cysteine + [acceptor protein]-L-lysine = [E2 ubiquitin-conjugating enzyme]-L-cysteine + N(6)-ubiquitinyl-[acceptor protein]-L-lysine.. Functionally, E3 ubiquitin-protein ligase that mediates the formation of 'Lys-63'-linked ubiquitin chains. Regulates apical dominance by acting on the auxin transport proteins abundance. Together with RGLG5, mediates the ubiquitination and subsequent proteasomal degradation of the target protein PP2CA. Functions as a positive regulator of abscisic acid (ABA) signaling through ABA-dependent degradation of PP2CA, a major inhibitor of ABA signaling. Acts as a negative regulator of drought stress response. The chain is E3 ubiquitin-protein ligase RGLG1 from Arabidopsis thaliana (Mouse-ear cress).